The chain runs to 202 residues: tRNA (pseudouridine(54)-N(1))-methyltransferase (202 aa).

Residues Leu134 and Gly155 each contribute to the S-adenosyl-L-methionine site.

It belongs to the methyltransferase superfamily. TrmY family. In terms of assembly, homodimer.

The protein resides in the cytoplasm. It catalyses the reaction pseudouridine(54) in tRNA + S-adenosyl-L-methionine = N(1)-methylpseudouridine(54) in tRNA + S-adenosyl-L-homocysteine + H(+). Its function is as follows. Specifically catalyzes the N1-methylation of pseudouridine at position 54 (Psi54) in tRNAs. The sequence is that of tRNA (pseudouridine(54)-N(1))-methyltransferase from Thermococcus gammatolerans (strain DSM 15229 / JCM 11827 / EJ3).